The chain runs to 339 residues: Probable cytosolic iron-sulfur protein assembly protein CIAO1 (339 aa).

WD repeat units lie at residues 14-53 (HPDS…WICK), 59-98 (GHQR…FECV), 103-142 (GHEN…EYEC), 148-187 (SHTQ…WVCC), 192-231 (GHES…NEQG), 250-289 (FHTR…DPQQ), and 301-339 (AHSQ…PAGL). The LYR motif; required for interaction with HSC20 motif lies at 176–178 (LYQ).

Belongs to the WD repeat CIA1 family. As to quaternary structure, component of the CIA complex. Interacts with CIAO2A and forms a complex with CIAO2B and MMS19; the interactions with CIAO2A and CIAO2B are mutually exclusive. Interacts with CHD1L, ERCC2, IREB2 and POLD1. Component of the MMXD complex, which includes CIAO1, ERCC2, CIAO2B, MMS19 and SLC25A5. Interacts with WT1. Interacts with CIAO3. Interacts (via LYR motif) with HSC20.

The protein localises to the cytoplasm. Its function is as follows. Key component of the cytosolic iron-sulfur protein assembly (CIA) complex, a multiprotein complex that mediates the incorporation of iron-sulfur cluster into extramitochondrial Fe/S proteins. As a CIA complex component, interacts specifically with CIAO2A or CIAO2B and MMS19 to assist different branches of iron-sulfur protein assembly, depending of its interactors. The complex CIAO1:CIAO2B:MMS19 binds to and facilitates the assembly of most cytosolic-nuclear Fe/S proteins. CIAO1:CIAO2A specifically matures ACO1 and stabilizes IREB2. Seems to specifically modulate the transactivation activity of WT1. As part of the mitotic spindle-associated MMXD complex it may play a role in chromosome segregation. The polypeptide is Probable cytosolic iron-sulfur protein assembly protein CIAO1 (Rattus norvegicus (Rat)).